The following is a 607-amino-acid chain: Glycosyltransferase 25 family member (607 aa).

The N-terminal stretch at Met-1–Gly-22 is a signal peptide. Asn-226, Asn-254, Asn-514, and Asn-565 each carry an N-linked (GlcNAc...) asparagine glycan. The interval Asp-566 to Leu-607 is disordered. 2 stretches are compositionally biased toward basic and acidic residues: residues Ser-571–Leu-581 and Ile-591–Leu-607. Positions Lys-604 to Leu-607 match the Prevents secretion from ER motif.

The protein belongs to the glycosyltransferase 25 family.

Its subcellular location is the endoplasmic reticulum lumen. This is Glycosyltransferase 25 family member from Aedes aegypti (Yellowfever mosquito).